The chain runs to 107 residues: Large ribosomal subunit protein uL24 (107 aa).

Belongs to the universal ribosomal protein uL24 family. In terms of assembly, part of the 50S ribosomal subunit.

Its function is as follows. One of two assembly initiator proteins, it binds directly to the 5'-end of the 23S rRNA, where it nucleates assembly of the 50S subunit. Functionally, one of the proteins that surrounds the polypeptide exit tunnel on the outside of the subunit. This is Large ribosomal subunit protein uL24 from Streptomyces coelicolor (strain ATCC BAA-471 / A3(2) / M145).